A 487-amino-acid polypeptide reads, in one-letter code: MSAKEVRTRFAPSPTGYMHVGNLRTALYTYLIAKHENGKFILRIEDTDQGRYVEGAVDVIYKTLEMTGLKHDEGPDVGGPVGPYIQSERKGTYMEYAKELVEKGEAYYCFCDKERLDSLKENSDTFKYDGHCRNLSKEEVEENLKNGVPYVIRQKNPLDGVTTFEDEIYGTISVDNSELEDMILIKSDGLPTYNFANVVDDHLMGITHVVRGNEYLSSAPKYNRLYNAFGWDIPTYVHCPPIMKDAHNKLSKRNGDASFEDLLKKGYLKEAVVNFIALLGWNPGTNQEIFTLEELVKEFDYKNINKSPSIFDTTKLKWMNGEYIKKLSLDEFHKYALPYYEEIFTKEEMETYNLLKLSEQVQTRIEVFTEIPELVAFVKELPNYDISIYSHKKMKTNPENSLVTLEKALPALEALEDWTFDALNDVIYSLVKELEVKNGVVFWPVRTALSGEASSPGGAFELAEILGKKESLRRVRVGIEKLKEAIN.

The 'HIGH' region signature appears at 12–22; the sequence is PSPTGYMHVGN. Residues 249–253 carry the 'KMSKS' region motif; sequence KLSKR. Lys-252 provides a ligand contact to ATP.

This sequence belongs to the class-I aminoacyl-tRNA synthetase family. Glutamate--tRNA ligase type 1 subfamily. In terms of assembly, monomer.

The protein resides in the cytoplasm. It carries out the reaction tRNA(Glu) + L-glutamate + ATP = L-glutamyl-tRNA(Glu) + AMP + diphosphate. Catalyzes the attachment of glutamate to tRNA(Glu) in a two-step reaction: glutamate is first activated by ATP to form Glu-AMP and then transferred to the acceptor end of tRNA(Glu). This is Glutamate--tRNA ligase from Clostridium novyi (strain NT).